The chain runs to 485 residues: Cholesterol 16,22-dihydroxylase CYP90G4 (485 aa).

Residues 4 to 24 (VVILFFLFPTLLVLVVAVLGL) traverse the membrane as a helical segment. Cysteine 432 is a binding site for heme.

The protein belongs to the cytochrome P450 family. As to expression, mainly expressed in leaves and, at low levels, in roots and stems.

Its subcellular location is the membrane. It carries out the reaction cholesterol + 2 reduced [NADPH--hemoprotein reductase] + 2 O2 = (16S,22S)-dihydroxycholesterol + 2 oxidized [NADPH--hemoprotein reductase] + 2 H2O + 2 H(+). Its pathway is steroid metabolism; cholesterol metabolism. Functionally, involved in the biosynthesis of spiroketal steroid and saponin natural products from cholesterol such as diosgenin and analogs (e.g. furostanol and spirostanol), plant defense compounds used as main precursors for the industrial production of steroid hormones. During the 5,6-spiroketalization of cholesterol, catalyzes the hydroxylation of cholesterol to form 16S,22S-dihydroxycholesterol and, possibly, the subsequent conversion of 16S,22S-dihydroxycholesterol into 16-oxo-22-hydroxy-cholesterol and 16-hydroxy-22-oxo-cholesterol. 16-hydroxy-22-oxo-cholesterol submit a spontaneous reaction leading to the production of furostanol-type steroid diastereomers, precursors of diosgenin. This Paris polyphylla (Daiswa polyphylla) protein is Cholesterol 16,22-dihydroxylase CYP90G4.